We begin with the raw amino-acid sequence, 1409 residues long: DNA-directed RNA polymerase subunit beta' (1409 aa).

Residues C70, C72, C85, and C88 each coordinate Zn(2+). Residues D458, D460, and D462 each coordinate Mg(2+). Residues C813, C887, C894, and C897 each contribute to the Zn(2+) site.

It belongs to the RNA polymerase beta' chain family. As to quaternary structure, the RNAP catalytic core consists of 2 alpha, 1 beta, 1 beta' and 1 omega subunit. When a sigma factor is associated with the core the holoenzyme is formed, which can initiate transcription. It depends on Mg(2+) as a cofactor. Zn(2+) is required as a cofactor.

It carries out the reaction RNA(n) + a ribonucleoside 5'-triphosphate = RNA(n+1) + diphosphate. DNA-dependent RNA polymerase catalyzes the transcription of DNA into RNA using the four ribonucleoside triphosphates as substrates. The sequence is that of DNA-directed RNA polymerase subunit beta' from Delftia acidovorans (strain DSM 14801 / SPH-1).